The chain runs to 318 residues: Ribose-phosphate pyrophosphokinase (318 aa).

ATP-binding positions include D46–E48 and R105–Q106. Mg(2+) contacts are provided by H139 and D178. The active site involves K201. D-ribose 5-phosphate is bound by residues R203, D227, and D231–T235.

It belongs to the ribose-phosphate pyrophosphokinase family. Class I subfamily. In terms of assembly, homohexamer. The cofactor is Mg(2+).

The protein resides in the cytoplasm. The enzyme catalyses D-ribose 5-phosphate + ATP = 5-phospho-alpha-D-ribose 1-diphosphate + AMP + H(+). It functions in the pathway metabolic intermediate biosynthesis; 5-phospho-alpha-D-ribose 1-diphosphate biosynthesis; 5-phospho-alpha-D-ribose 1-diphosphate from D-ribose 5-phosphate (route I): step 1/1. In terms of biological role, involved in the biosynthesis of the central metabolite phospho-alpha-D-ribosyl-1-pyrophosphate (PRPP) via the transfer of pyrophosphoryl group from ATP to 1-hydroxyl of ribose-5-phosphate (Rib-5-P). The protein is Ribose-phosphate pyrophosphokinase of Helicobacter pylori (strain ATCC 700392 / 26695) (Campylobacter pylori).